The sequence spans 459 residues: NADP-specific glutamate dehydrogenase (459 aa).

Residue Lys116 is part of the active site.

This sequence belongs to the Glu/Leu/Phe/Val dehydrogenases family. As to quaternary structure, homohexamer.

The catalysed reaction is L-glutamate + NADP(+) + H2O = 2-oxoglutarate + NH4(+) + NADPH + H(+). This chain is NADP-specific glutamate dehydrogenase (GDHA), found in Schwanniomyces occidentalis (Yeast).